A 537-amino-acid polypeptide reads, in one-letter code: Glutamate--tRNA ligase (537 aa).

The short motif at 9 to 19 (PSPTGLQHIGG) is the 'HIGH' region element. 4 residues coordinate Zn(2+): C125, C127, C152, and E154. The 'KMSKS' region motif lies at 270–274 (KLSKR). K273 provides a ligand contact to ATP.

The protein belongs to the class-I aminoacyl-tRNA synthetase family. Glutamate--tRNA ligase type 1 subfamily. As to quaternary structure, monomer. It depends on Zn(2+) as a cofactor.

It is found in the cytoplasm. The catalysed reaction is tRNA(Glu) + L-glutamate + ATP = L-glutamyl-tRNA(Glu) + AMP + diphosphate. Catalyzes the attachment of glutamate to tRNA(Glu) in a two-step reaction: glutamate is first activated by ATP to form Glu-AMP and then transferred to the acceptor end of tRNA(Glu). The polypeptide is Glutamate--tRNA ligase (Treponema pallidum (strain Nichols)).